A 1557-amino-acid polypeptide reads, in one-letter code: Ras guanine nucleotide exchange factor K (1557 aa).

Pro residues predominate over residues 1–16 (MEPTINPPVNLPPPVP). Disordered stretches follow at residues 1 to 121 (MEPT…SYTV), 146 to 181 (VETL…KLSV), 195 to 238 (LYQQ…SPQL), 283 to 347 (SPLP…GLTP), 558 to 619 (NNNN…DELS), and 881 to 937 (TNNN…QVNH). 7 stretches are compositionally biased toward low complexity: residues 17-40 (SRSN…NNTN), 52-63 (SSPSSPSSPSPS), 73-90 (NNNN…NGNV), 102-114 (ISSP…HTSS), 148-161 (TLSS…KTTT), 195-207 (LYQQ…NPNS), and 222-236 (PPSS…STSP). Pro residues predominate over residues 283-310 (SPLPPPPLTIPNKVPPLPMRLPPPPPPQ). Coiled coils occupy residues 310 to 338 (QQLD…SNST) and 591 to 629 (NNNN…EEEL). A compositionally biased stretch (low complexity) spans 311–333 (QLDQMYSNNNQQQQQQQQQQQNN). A compositionally biased stretch (polar residues) spans 334-343 (ESNSTTTSEG). Composition is skewed to low complexity over residues 558–610 (NNNN…NNNN) and 881–928 (TNNN…TPTT). In terms of domain architecture, N-terminal Ras-GEF spans 1058–1177 (LNAEIDAATL…QIRNCILKRT (120 aa)). The interval 1254–1303 (PSISQNTPSSPSLIPSSPRPITSSSSVSSSTLLKSPLSQQAKSRIPETKT) is disordered. The segment covering 1261 to 1291 (PSSPSLIPSSPRPITSSSSVSSSTLLKSPLS) has biased composition (low complexity). The 234-residue stretch at 1316–1549 (DDEEIARQLT…YHLSLLKEPR (234 aa)) folds into the Ras-GEF domain.

Promotes the exchange of Ras-bound GDP by GTP. The protein is Ras guanine nucleotide exchange factor K (gefK) of Dictyostelium discoideum (Social amoeba).